The following is a 538-amino-acid chain: Bifunctional purine biosynthesis protein PurH (538 aa).

An MGS-like domain is found at 11–158 (PDLHRVRRAL…KNHAYTGVVT (148 aa)).

It belongs to the PurH family.

It catalyses the reaction (6R)-10-formyltetrahydrofolate + 5-amino-1-(5-phospho-beta-D-ribosyl)imidazole-4-carboxamide = 5-formamido-1-(5-phospho-D-ribosyl)imidazole-4-carboxamide + (6S)-5,6,7,8-tetrahydrofolate. The enzyme catalyses IMP + H2O = 5-formamido-1-(5-phospho-D-ribosyl)imidazole-4-carboxamide. The protein operates within purine metabolism; IMP biosynthesis via de novo pathway; 5-formamido-1-(5-phospho-D-ribosyl)imidazole-4-carboxamide from 5-amino-1-(5-phospho-D-ribosyl)imidazole-4-carboxamide (10-formyl THF route): step 1/1. It functions in the pathway purine metabolism; IMP biosynthesis via de novo pathway; IMP from 5-formamido-1-(5-phospho-D-ribosyl)imidazole-4-carboxamide: step 1/1. The protein is Bifunctional purine biosynthesis protein PurH of Bartonella bacilliformis (strain ATCC 35685 / KC583 / Herrer 020/F12,63).